The chain runs to 229 residues: ADP-ribosylation factor-like protein 6-interacting protein 4 (229 aa).

A compositionally biased stretch (basic residues) spans 1-20; that stretch reads MAHVGSRKRSRSRSRSRSGR. The segment at 1–152 is disordered; the sequence is MAHVGSRKRS…EDNDGPVLTD (152 aa). Positions 21 to 35 are enriched in basic and acidic residues; the sequence is RGSEKRSKRSSKDAS. Low complexity predominate over residues 66-87; sequence SRSSSTSSSSSSSSSASSSSSS. Basic residues predominate over residues 90 to 117; sequence RKKRAKHKEKKRKKKKKKRKKKLKKRVK. Phosphoserine occurs at positions 140 and 174. Lys-191 participates in a covalent cross-link: Glycyl lysine isopeptide (Lys-Gly) (interchain with G-Cter in SUMO2).

It belongs to the ARL6IP4 family. In terms of assembly, interacts with ZCCHC17. Interacts with SRSF2. Interacts with ARL6. Widely expressed. Expressed at high level in testis and thymus.

Its subcellular location is the nucleus. The protein resides in the nucleolus. It is found in the nucleus speckle. Its function is as follows. Involved in modulating alternative pre-mRNA splicing with either 5' distal site activation or preferential use of 3' proximal site. The sequence is that of ADP-ribosylation factor-like protein 6-interacting protein 4 (Arl6ip4) from Mus musculus (Mouse).